Reading from the N-terminus, the 299-residue chain is Putative KilA-N domain-containing protein R879 (299 aa).

The region spanning 1–75 (MKSDNGILMS…IKVSEIVLSY (75 aa)) is the KilA-N domain. Positions 76–150 (HAKEAIKEKE…DKKINELLSK (75 aa)) form a coiled coil.

This is Putative KilA-N domain-containing protein R879 from Acanthamoeba polyphaga mimivirus (APMV).